The following is a 219-amino-acid chain: Proteasome subunit beta (219 aa).

Positions 1-14 (MISNSEYHKEYMKG) are cleaved as a propeptide — removed in mature form; by autocatalysis. Threonine 15 serves as the catalytic Nucleophile.

Belongs to the peptidase T1B family. In terms of assembly, the 20S proteasome core is composed of 14 alpha and 14 beta subunits that assemble into four stacked heptameric rings, resulting in a barrel-shaped structure. The two inner rings, each composed of seven catalytic beta subunits, are sandwiched by two outer rings, each composed of seven alpha subunits. The catalytic chamber with the active sites is on the inside of the barrel. Has a gated structure, the ends of the cylinder being occluded by the N-termini of the alpha-subunits. Is capped at one or both ends by the proteasome regulatory ATPase, PAN.

The protein localises to the cytoplasm. The enzyme catalyses Cleavage of peptide bonds with very broad specificity.. With respect to regulation, the formation of the proteasomal ATPase PAN-20S proteasome complex, via the docking of the C-termini of PAN into the intersubunit pockets in the alpha-rings, triggers opening of the gate for substrate entry. Interconversion between the open-gate and close-gate conformations leads to a dynamic regulation of the 20S proteasome proteolysis activity. Its function is as follows. Component of the proteasome core, a large protease complex with broad specificity involved in protein degradation. The chain is Proteasome subunit beta from Methanococcus maripaludis (strain C5 / ATCC BAA-1333).